The sequence spans 355 residues: Chromosomal protein D1 (355 aa).

N-acetylmethionine is present on Met1. The disordered stretch occupies residues 1–355 (MEEVAVKKRG…NYNDSESVAA (355 aa)). The a.T hook 1 DNA-binding region spans 7–14 (KKRGRPSK). Ser30 carries the phosphoserine modification. 2 DNA-binding regions (a.T hook) span residues 34 to 41 (KKRGRPAK) and 60 to 67 (KIQNDEDP). Positions 64–77 (DEDPEDEGEEDGDG) are enriched in acidic residues. Ser80, Ser88, and Ser89 each carry phosphoserine. A DNA-binding region (a.T hook 4) is located at residues 94 to 101 (KGRGRPKS). Phosphoserine is present on residues Ser107, Ser109, and Ser112. Phosphothreonine is present on Thr115. Position 118 is a phosphoserine (Ser118). Residues 119 to 130 (AKKRKAGRPKKH) are compositionally biased toward basic residues. The a.T hook 5 DNA-binding region spans 122-129 (RKAGRPKK). 2 positions are modified to phosphoserine; by CK2: Ser133 and Ser135. Acidic residues predominate over residues 135-147 (SENEDDQDEDDDG). Residues Ser149, Ser150, Ser161, Ser164, and Ser170 each carry the phosphoserine modification. Residues 155-162 (RPVGRPSA) constitute a DNA-binding region (a.T hook 6). The a.T hook 7 DNA-binding region spans 174 to 181 (RGLGRPKK). Ser186 is subject to Phosphoserine; by CK2. Positions 196 to 203 (KKRGRPPQ) form a DNA-binding region, a.T hook 8. Ser208 carries the phosphoserine modification. The segment at residues 219 to 226 (RPRGRPKA) is a DNA-binding region (a.T hook 9). Acidic residues predominate over residues 237–247 (NDDDQDDENSG). Phosphoserine occurs at positions 246, 252, and 253. DNA-binding regions (a.T hook) lie at residues 262–269 (KKRGRPSL) and 281–288 (KPRSRPAK). A phosphoserine mark is found at Ser299 and Ser307. Residues 307 to 318 (SKKESNDEDRAV) show a composition bias toward basic and acidic residues. Residue Ser311 is modified to Phosphoserine; by CK2. Thr321 carries the phosphothreonine modification. Phosphoserine; by CK2 is present on Ser332. The segment covering 345–355 (DNYNDSESVAA) has biased composition (polar residues).

The protein localises to the nucleus. The protein resides in the chromosome. In terms of biological role, this satellite DNA-associated protein is a double-stranded DNA binding protein specific for tracts of pure at DNA. It may play a role in organizing the higher-order structure of euchromatin as well as heterochromatin. The chain is Chromosomal protein D1 (D1) from Drosophila melanogaster (Fruit fly).